Consider the following 394-residue polypeptide: Dihydroorotase (394 aa).

Zn(2+) contacts are provided by H15, H17, K98, H135, H175, and D245. Residue K98 is modified to N6-carboxylysine.

It belongs to the metallo-dependent hydrolases superfamily. DHOase family. Class II DHOase subfamily. Zn(2+) serves as cofactor.

It carries out the reaction (S)-dihydroorotate + H2O = N-carbamoyl-L-aspartate + H(+). It participates in pyrimidine metabolism; UMP biosynthesis via de novo pathway; (S)-dihydroorotate from bicarbonate: step 3/3. The sequence is that of Dihydroorotase (PYR3) from Mycosarcoma maydis (Corn smut fungus).